The primary structure comprises 836 residues: Glutamate receptor ionotropic, kainate 1 (836 aa).

The first 30 residues, 1–30, serve as a signal peptide directing secretion; sequence MERGTVLIQPGLWTRDTSWTLLYFLCYILP. Residues 31 to 561 are Extracellular-facing; sequence QTSPQVLRIG…VFSFLNPLSP (531 aa). Asparagine 68, asparagine 74, asparagine 276, asparagine 379, asparagine 413, asparagine 424, and asparagine 431 each carry an N-linked (GlcNAc...) asparagine glycan. The L-glutamate site is built by proline 516, threonine 518, and arginine 523. N-linked (GlcNAc...) asparagine glycosylation is present at asparagine 546. Residues 562–582 form a helical membrane-spanning segment; sequence DIWMYVLLACLGVSCVLFVIA. Topologically, residues 583 to 638 are cytoplasmic; sequence RFTPYEWYNPHPCNPDSDVVENNFTLLNSFWFGVGALMQQGSELMPKALSTRIVGG. The helical transmembrane segment at 639–659 threads the bilayer; that stretch reads IWWFFTLIIISSYTANLAAFL. Residues 660 to 721 are Extracellular-facing; sequence TVERMESPID…RQPSALGVEN (62 aa). L-glutamate contacts are provided by serine 689 and threonine 690. Residues 722–742 traverse the membrane as a helical segment; that stretch reads IGGIFIVLAAGLVLSVFVAIG. The Cytoplasmic portion of the chain corresponds to 743–836; the sequence is EFIYKSRKNN…RRTQRKETVA (94 aa).

The protein belongs to the glutamate-gated ion channel (TC 1.A.10.1) family. GRIK1 subfamily. As to quaternary structure, homotetramer or heterotetramer of pore-forming glutamate receptor subunits. Tetramers may be formed by the dimerization of dimers. Can form functional heteromeric receptors with GRIK4 and GRIK5. Interacts with KLHL17. In terms of tissue distribution, most abundant in the cerebellum. Also present in the suprachiasmatic nuclei of the hypothalamus.

The protein resides in the cell membrane. The protein localises to the postsynaptic cell membrane. The enzyme catalyses Ca(2+)(in) = Ca(2+)(out). In terms of biological role, ionotropic glutamate receptor that functions as a cation-permeable ligand-gated ion channel, gated by L-glutamate and the glutamatergic agonist kainic acid. L-glutamate acts as an excitatory neurotransmitter at many synapses in the central nervous system. Binding of the excitatory neurotransmitter L-glutamate induces a conformation change, leading to the opening of the cation channel, and thereby converts the chemical signal to an electrical impulse. The receptor then desensitizes rapidly and enters a transient inactive state, characterized by the presence of bound agonist. In Mus musculus (Mouse), this protein is Glutamate receptor ionotropic, kainate 1 (Grik1).